Here is a 24-residue protein sequence, read N- to C-terminus: Prokineticin 1-like protein (24 aa).

The cysteines at positions 7 and 19 are disulfide-linked.

As to expression, expressed by the skin glands.

Its subcellular location is the secreted. In terms of biological role, stimulates insulin secretion by BRIN-BD11 cells in vitro. The chain is Prokineticin 1-like protein from Pelophylax saharicus (Sahara frog).